The sequence spans 964 residues: Translation initiation factor IF-2 (964 aa).

Over residues 105-119 the composition is skewed to low complexity; that stretch reads AALAESEASEAAPVV. Disordered regions lie at residues 105 to 133 and 146 to 378; these read AALA…EHRR and KARQ…PTEP. Composition is skewed to basic and acidic residues over residues 123 to 133, 146 to 183, 197 to 253, and 266 to 278; these read EVARREEEHRR, KARQ…KAEE, EAPR…RAIR, and PAER…KKAE. Positions 288 to 302 are enriched in low complexity; sequence KPAGEARPAAAKKPA. Pro residues predominate over residues 303 to 313; the sequence is APAPAAAPAPG. The 170-residue stretch at 464–633 folds into the tr-type G domain; the sequence is TRPPVVTVMG…LLQAEVLELK (170 aa). The G1 stretch occupies residues 473-480; that stretch reads GHVDHGKT. 473-480 serves as a coordination point for GTP; that stretch reads GHVDHGKT. The tract at residues 498 to 502 is G2; it reads GITQH. A G3 region spans residues 519-522; sequence DTPG. GTP is bound by residues 519–523 and 573–576; these read DTPGH and TKVD. The tract at residues 573–576 is G4; that stretch reads TKVD. Residues 609 to 611 form a G5 region; sequence SAK.

It belongs to the TRAFAC class translation factor GTPase superfamily. Classic translation factor GTPase family. IF-2 subfamily.

The protein resides in the cytoplasm. Its function is as follows. One of the essential components for the initiation of protein synthesis. Protects formylmethionyl-tRNA from spontaneous hydrolysis and promotes its binding to the 30S ribosomal subunits. Also involved in the hydrolysis of GTP during the formation of the 70S ribosomal complex. This chain is Translation initiation factor IF-2, found in Ralstonia pickettii (strain 12J).